The chain runs to 396 residues: uncharacterized protein (396 aa).

The protein belongs to the mycobacterial PPE family.

This is an uncharacterized protein from Mycobacterium tuberculosis (strain ATCC 25618 / H37Rv).